The sequence spans 198 residues: MQAFRVHTGIGVPLRRSNVDTDQIIPAVFLKRVTRNGFEDGLFATWRVDPSFVLNLSPFDRGSVLVVGPDFGIGSSREHAVWALMDYGFRVVISSRFGDIFHGNAGKAGLLAAQVAQDDVEFLWKLIEQKPGLEITVNLQDRNINAATVVLPFKIDDYTAWRLLEGLDDIALNLRKLDEIEAFESARPAWKPRTLPTT.

This sequence belongs to the LeuD family. LeuD type 1 subfamily. As to quaternary structure, heterodimer of LeuC and LeuD.

The catalysed reaction is (2R,3S)-3-isopropylmalate = (2S)-2-isopropylmalate. Its pathway is amino-acid biosynthesis; L-leucine biosynthesis; L-leucine from 3-methyl-2-oxobutanoate: step 2/4. Catalyzes the isomerization between 2-isopropylmalate and 3-isopropylmalate, via the formation of 2-isopropylmaleate. The chain is 3-isopropylmalate dehydratase small subunit from Mycobacterium leprae (strain Br4923).